The following is a 914-amino-acid chain: MGAEKRINDEEAQPLTGRDRSRDSIDSTSTASISLALIDQANRSTHAGRTTPPRNFGNGEKYRDNDDDNPEGGLPPPSGAQRTPKKVSIIFWLVAALCVGGWLVAFFVFMGSPKKDSDKEVVVSGAENSTVPGVVSTGGKKVDLDGVLTGFWSPRSHEISWIPGPDGEDGLLLEQDGDENAGYLRVENIRNQKSTNKKDDAVVLMKRETFKVGARRVRPSKVWPSPDLKTVLVMSDRLKNWRHSYTGNYWLFNVETQTGEPLDPGSPDGRIQLASWSPKSDSVVFTRDNNMFIRNLSSKDVKPITTDGGVNLFYGIPDWVYEEEVFSGNSATWWDNDGKFVAFLRTNESRVPEYPVQYFIPTVGRVAHAGEEHYPNTRKIKYPKAGAPNPTVNIQFFDVEKGEVFSIEMEDDLPDHDRLIIEVIWASNGKVLVRETNRESDRLSMVLVDAKDRTAKVIRSQDFSKLDGGWIEPSQSTYFIPADPGNGRPHDGYIETVPFEGFNHLAYFTPLDNPSPVFLTSGNWEVTDAPSAVDLKRGLVYFVAAKEQPTERHVYTVRLDGSDLQPIVNTKAPAYYTISLSTGAGYALLKYEGPEIPWQKVISTPANEERFEETIENNTELAGRAKDYALPSLYYQTITIDGYTLPVVERRPPNFNPDKKYPVLFHLYGGPGSQTVSKRFKVDFQSYVASNLGYIVVTVDGRGTGFIGRKARCVVRDNLGHYEAIDQIETAKAWGKRPYVDATRMAIWGWSYGGFMTLKTLERDAGQTFQYGMAVAPVTDWQFYDSIYTERYMHTPQNNPAGYANTAVSNVTALGQTVRFMVIHGTGDDNVHYQNTLTLLDKLDVDNVGNFDVHVYPDSDHGIYFHNAYKMLHERLSDWLVNAFNGEWVKIRNPVPNKSLMRRARSLLKRMSNA.

The segment at 1 to 82 is disordered; that stretch reads MGAEKRINDE…GLPPPSGAQR (82 aa). The Cytoplasmic segment spans residues 1–88; that stretch reads MGAEKRINDE…GAQRTPKKVS (88 aa). Over residues 26 to 38 the composition is skewed to low complexity; sequence DSTSTASISLALI. A helical; Signal-anchor for type II membrane protein membrane pass occupies residues 89 to 109; the sequence is IIFWLVAALCVGGWLVAFFVF. Residues 110-914 are Vacuolar-facing; sequence MGSPKKDSDK…RSLLKRMSNA (805 aa). Asn128, Asn295, Asn347, and Asn617 each carry an N-linked (GlcNAc...) asparagine glycan. Ser751 acts as the Charge relay system in catalysis. Asn810 is a glycosylation site (N-linked (GlcNAc...) asparagine). Residues Asp828 and His861 each act as charge relay system in the active site. N-linked (GlcNAc...) asparagine glycosylation occurs at Asn897.

It belongs to the peptidase S9B family.

It localises to the vacuole membrane. The catalysed reaction is Release of an N-terminal dipeptide, Xaa-Yaa-|-Zaa-, from a polypeptide, preferentially when Yaa is Pro, provided Zaa is neither Pro nor hydroxyproline.. Functionally, type IV dipeptidyl-peptidase which removes N-terminal dipeptides sequentially from polypeptides having unsubstituted N-termini provided that the penultimate residue is proline. The sequence is that of Probable dipeptidyl-aminopeptidase B (DAPB) from Uncinocarpus reesii (strain UAMH 1704).